Reading from the N-terminus, the 1978-residue chain is Protein MOR1 (1978 aa).

HEAT repeat units follow at residues 48–86 (DPRL…AADS) and 165–202 (IPPK…WIGK). A disordered region spans residues 230-264 (AGAKPTRKIRSEQDKEPEAEASSDVVGDGPSEEAV). Basic and acidic residues predominate over residues 238–247 (IRSEQDKEPE). HEAT repeat units follow at residues 322–359 (GDFS…GLRT), 363–400 (ASSR…AGCL), and 442–479 (KAHK…SVGM). Residues 501–587 (IAGSGGGDQA…SVEPPEDVEP (87 aa)) are disordered. The segment covering 510–527 (AGTSSVTVQSSVGSTATG) has biased composition (low complexity). The segment covering 565–577 (GKKDGSVRNEGSK) has biased composition (basic and acidic residues). HEAT repeat units lie at residues 849 to 886 (DIST…EANK), 890 to 928 (PTGT…AMGP), 932 to 969 (KASK…AVHL), and 1008 to 1045 (VDAI…VSGQ). Residues 1087 to 1115 (SKGVTKISKSTSNGTLKQGNRSRAVPTKG) form a disordered region. Polar residues predominate over residues 1093–1107 (ISKSTSNGTLKQGNR). HEAT repeat units lie at residues 1230–1253 (LKVL…MTEA), 1254–1286 (EAAI…QIIQ), 1287–1325 (AYSV…TCGT), and 1328–1365 (GGLL…ILGA). Residues 1393–1403 (MEKRREGKPGE) are compositionally biased toward basic and acidic residues. A disordered region spans residues 1393–1431 (MEKRREGKPGEARAALRRSVRDSGPEVAEQSGDISQTVP). One copy of the HEAT 14 repeat lies at 1535 to 1575 (RSCKYVLNTLMQTFQNKKLAHAVKEGTLESLITELLLWLLD). Residues 1837–1862 (AAAGRTPSSLPLSTPPPSSLALPSPD) form a disordered region.

This sequence belongs to the TOG/XMAP215 family. Expressed in roots, cotyledons, rosette leaves, stems, open flowers and green siliques.

It is found in the cytoplasm. It localises to the cytoskeleton. The protein localises to the phragmoplast. The protein resides in the spindle. Microtubule-binding protein that is essential for cortical microtubules organization and function. Essential for maintaining the interphase cortical array and for correct morphogenesis. Promotes rapid growth and shrinkage of microtubules and suppresses the pausing of interphase microtubules. Regulates the structure and function of microtubule arrays during mitosis and cytokinesis. Probably not required for cellulose microfibrils alignment in roots. This Arabidopsis thaliana (Mouse-ear cress) protein is Protein MOR1 (MOR1).